Here is a 1697-residue protein sequence, read N- to C-terminus: Histone acetyltransferase HAC1 (1697 aa).

The span at 1–16 shows a compositional bias: polar residues; the sequence is MNVQAHMSGQVSNQGT. 6 disordered regions span residues 1–45, 202–221, 385–439, 555–574, 583–631, and 843–901; these read MNVQ…LGPS, SNFGLGSGGNMSSMSSQRNT, SFQA…QQQR, HWQSQSQEHTQMSNSMSNER, RMSG…GNRD, and IGIA…GKPE. 2 stretches are compositionally biased toward low complexity: residues 17-28 and 202-217; these read MSQQNGNSQMQN and SNFGLGSGGNMSSMSS. Residues 385–398 show a composition bias toward polar residues; that stretch reads SFQAVSRTSSSLSH. Residues 399 to 439 show a composition bias toward low complexity; the sequence is QQQQFQQQPNRFQQQPNQFHQQQQQFLHQQQLKQQSQQQQR. Polar residues-rich tracts occupy residues 556–571 and 584–628; these read WQSQSQEHTQMSNSMS and MSGT…NGNG. The TAZ-type 1 zinc-finger motif lies at 629–709; the sequence is NRDPRFKNQQ…EPNCPVCIPV (81 aa). The segment covering 873–901 has biased composition (basic and acidic residues); the sequence is TKVEKEPESLKKENLAESTEHTSKSGKPE. The PHD-type zinc finger occupies 989 to 1066; that stretch reads HYFCIPCYNE…EYTCPYCFIA (78 aa). Residues 1081–1517 form the CBP/p300-type HAT domain; the sequence is VLGAKDLPRT…VLYHLHNPTA (437 aa). Acetyl-CoA-binding positions include 1204–1206, 1223–1224, and tryptophan 1279; these read LDS and RT. 2 ZZ-type zinc fingers span residues 1399–1462 and 1519–1572; these read HLQP…IMDI and AFVT…SLAD. Positions 1404, 1407, 1419, 1422, 1428, 1431, 1444, 1452, 1524, 1527, 1539, 1542, 1548, 1551, 1560, and 1562 each coordinate Zn(2+). Residues 1579 to 1662 form a TAZ-type 2 zinc finger; the sequence is EARQLRVLQL…ECHVPRCRDL (84 aa).

Rosette leaves, stems and flowers.

The protein resides in the nucleus. It carries out the reaction L-lysyl-[protein] + acetyl-CoA = N(6)-acetyl-L-lysyl-[protein] + CoA + H(+). Acetyltransferase enzyme. Acetylates histones, giving a specific tag for transcriptional activation. The chain is Histone acetyltransferase HAC1 (HAC1) from Arabidopsis thaliana (Mouse-ear cress).